A 124-amino-acid polypeptide reads, in one-letter code: Holo-[acyl-carrier-protein] synthase (124 aa).

The Mg(2+) site is built by D8 and E55.

The protein belongs to the P-Pant transferase superfamily. AcpS family. It depends on Mg(2+) as a cofactor.

Its subcellular location is the cytoplasm. The enzyme catalyses apo-[ACP] + CoA = holo-[ACP] + adenosine 3',5'-bisphosphate + H(+). Transfers the 4'-phosphopantetheine moiety from coenzyme A to a Ser of acyl-carrier-protein. The chain is Holo-[acyl-carrier-protein] synthase from Desulfovibrio desulfuricans (strain ATCC 27774 / DSM 6949 / MB).